The following is a 295-amino-acid chain: 4-hydroxy-tetrahydrodipicolinate synthase (295 aa).

Position 46 (Thr46) interacts with pyruvate. Tyr134 functions as the Proton donor/acceptor in the catalytic mechanism. The active-site Schiff-base intermediate with substrate is Lys162. Residue Ile205 coordinates pyruvate.

It belongs to the DapA family. As to quaternary structure, homotetramer; dimer of dimers.

It is found in the cytoplasm. The catalysed reaction is L-aspartate 4-semialdehyde + pyruvate = (2S,4S)-4-hydroxy-2,3,4,5-tetrahydrodipicolinate + H2O + H(+). Its pathway is amino-acid biosynthesis; L-lysine biosynthesis via DAP pathway; (S)-tetrahydrodipicolinate from L-aspartate: step 3/4. Catalyzes the condensation of (S)-aspartate-beta-semialdehyde [(S)-ASA] and pyruvate to 4-hydroxy-tetrahydrodipicolinate (HTPA). This is 4-hydroxy-tetrahydrodipicolinate synthase from Anaeromyxobacter sp. (strain K).